The sequence spans 284 residues: Pantothenate synthetase (284 aa).

ATP is bound at residue 30-37 (MGALHNGH). The Proton donor role is filled by H37. Q61 contacts (R)-pantoate. Q61 is a beta-alanine binding site. Position 147–150 (147–150 (GEKD)) interacts with ATP. Q153 provides a ligand contact to (R)-pantoate. Residues L176 and 184–187 (SSSR) contribute to the ATP site.

It belongs to the pantothenate synthetase family. Homodimer.

The protein localises to the cytoplasm. It carries out the reaction (R)-pantoate + beta-alanine + ATP = (R)-pantothenate + AMP + diphosphate + H(+). The protein operates within cofactor biosynthesis; (R)-pantothenate biosynthesis; (R)-pantothenate from (R)-pantoate and beta-alanine: step 1/1. Catalyzes the condensation of pantoate with beta-alanine in an ATP-dependent reaction via a pantoyl-adenylate intermediate. The polypeptide is Pantothenate synthetase (Bartonella henselae (strain ATCC 49882 / DSM 28221 / CCUG 30454 / Houston 1) (Rochalimaea henselae)).